The primary structure comprises 74 residues: Protein SMIM7 homolog (74 aa).

Residues 53 to 73 (FRAFIGLWNIFIMFLMLVFFG) traverse the membrane as a helical segment.

The protein belongs to the SMIM7 family.

The protein resides in the membrane. The sequence is that of Protein SMIM7 homolog from Ixodes scapularis (Black-legged tick).